A 209-amino-acid chain; its full sequence is Protein GrpE (209 aa).

This sequence belongs to the GrpE family. As to quaternary structure, homodimer.

Its subcellular location is the cytoplasm. Participates actively in the response to hyperosmotic and heat shock by preventing the aggregation of stress-denatured proteins, in association with DnaK and GrpE. It is the nucleotide exchange factor for DnaK and may function as a thermosensor. Unfolded proteins bind initially to DnaJ; upon interaction with the DnaJ-bound protein, DnaK hydrolyzes its bound ATP, resulting in the formation of a stable complex. GrpE releases ADP from DnaK; ATP binding to DnaK triggers the release of the substrate protein, thus completing the reaction cycle. Several rounds of ATP-dependent interactions between DnaJ, DnaK and GrpE are required for fully efficient folding. The polypeptide is Protein GrpE (Colwellia psychrerythraea (strain 34H / ATCC BAA-681) (Vibrio psychroerythus)).